The chain runs to 388 residues: Salivary protein Tsal2A (388 aa).

Residues 1 to 18 form the signal peptide; that stretch reads MSLLYGLLILAFTRSCLV. A glycan (N-linked (GlcNAc...) asparagine) is linked at Asn260.

It belongs to the DNA/RNA non-specific endonuclease family. The cofactor is a divalent metal cation. As to expression, saliva (at protein level).

The protein localises to the secreted. Binds double-stranded DNA (dsDNA) with high affinity. Binds double-stranded RNA. Binds single-stranded DNA with lower affinity and with a preference for purine-rich sequences. Shows residual nuclease activity for dsDNA. Facilitates blood meal intake by lowering the local viscosity created by the release of host DNA. This is Salivary protein Tsal2A from Glossina morsitans morsitans (Savannah tsetse fly).